Reading from the N-terminus, the 511-residue chain is Aprataxin and PNK-like factor (511 aa).

The region spanning 1–108 is the FHA-like domain; that stretch reads MSGGFELQPR…RILSIPSEVE (108 aa). S116 bears the Phosphoserine; by ATM mark. S149 is modified (phosphoserine). The KBM signature appears at 182–191; it reads RKRILPTWML. Residues 223-370 are disordered; that stretch reads KSQLNTTQQG…ATDSVLQGSE (148 aa). Polar residues-rich tracts occupy residues 225-249 and 263-293; these read QLNTTQQGRRQLISSGSSENTSAEQ and STISSKEMPQSFSAITLSNTEMNNIKTNAQR. A compositionally biased stretch (basic residues) spans 304-315; it reads VSKHKIATKRTP. Over residues 324 to 344 the composition is skewed to polar residues; the sequence is CSENCSSAQGDSLQDESQGSH. Over residues 345–355 the composition is skewed to low complexity; the sequence is SESSSNPSNPE. Residues R376, Y381, Y386, and R387 each contribute to the a glycoprotein site. Residues 377–398 form a PBZ-type 1 zinc finger; that stretch reads TSCMYGANCYRKNPVHFQHFSH. The interval 406-416 is flexible linker; the sequence is GVQIVGQDETD. The PBZ-type 2 zinc-finger motif lies at 419 to 440; that stretch reads PECPYGPSCYRKNPQHKIEYRH. Y423, Y428, and R429 together coordinate a glycoprotein. A disordered region spans residues 449-497; the sequence is LDEDNDNVGQPNEYDLNDSFLDDEEEDYEPTDEDSDWEPGKEDEEKEDV. Residues 468–497 show a composition bias toward acidic residues; it reads FLDDEEEDYEPTDEDSDWEPGKEDEEKEDV. Positions 476-500 match the NAP1L motif motif; sequence YEPTDEDSDWEPGKEDEEKEDVEEL. Positions 487-511 form a coiled coil; the sequence is PGKEDEEKEDVEELLKEAKRFMKRK.

It belongs to the APLF family. In terms of assembly, interacts with LIG4. Interacts with PARP1. Interacts with XRCC4. Interacts (via KBM motif) with XRCC5 and XRCC6; promoting recruitment to DNA damage sites. Interacts with XRCC1. Interacts (via C-terminal disordered region) with histones; interacts with histone H2A, H2B and H3-H4. In terms of processing, poly-ADP-ribosylated. In addition to binding non covalently poly-ADP-ribose via its PBZ-type zinc fingers, the protein is also covalently poly-ADP-ribosylated by PARP1. Phosphorylated in an ATM-dependent manner upon double-strand DNA break.

It is found in the nucleus. The protein localises to the chromosome. It localises to the cytoplasm. Its subcellular location is the cytosol. Functionally, histone chaperone involved in single-strand and double-strand DNA break repair. Recruited to sites of DNA damage through interaction with branched poly-ADP-ribose chains, a polymeric post-translational modification synthesized transiently at sites of chromosomal damage to accelerate DNA strand break repair reactions. Following recruitment to DNA damage sites, acts as a histone chaperone that mediates histone eviction during DNA repair and promotes recruitment of histone variant MACROH2A1. Also has a nuclease activity: displays apurinic-apyrimidinic (AP) endonuclease and 3'-5' exonuclease activities in vitro. Also able to introduce nicks at hydroxyuracil and other types of pyrimidine base damage. Together with PARP3, promotes the retention of the LIG4-XRCC4 complex on chromatin and accelerate DNA ligation during non-homologous end-joining (NHEJ). Also acts as a negative regulator of cell pluripotency by promoting histone exchange. Required for the embryo implantation during the epithelial to mesenchymal transition in females. In Homo sapiens (Human), this protein is Aprataxin and PNK-like factor.